A 431-amino-acid polypeptide reads, in one-letter code: MSKNVVVIGTQWGDEGKGKIVDWLAESVQGVVRFQGGHNAGHTLWINGKKTILRLIPSGIMHPGVTCYIGNGVVLSPEALLKEIEELEAAGLDVRSRLQISEICPLILPYHVAVDKAREARKGESKIGTTGRGIGPAYEDKVARRALRVQDLFTPDIFDAKLDEVLDYHNFVLTQYLGAQAVSANEVRDQAMALAPAIKPMVRDVSSSIFLAQQQGARFLFEGAQGALLDVDHGTYPYVTSSNCVAGAASAGAGVGPQSLDYVLGITKAYTTRVGSGPFPTELLDEVGSRLATVGKEFGSVTGRPRRCGWFDGAALKRSVRLNGISGLCITKLDVLDGLEKLQLGVGYRVNGEFRDVLPYGAHAVAQAEPVLEELPGWSESTVGVTEYSKLPLNARRYLERVAEVCGVPIDLVSTGPDRNETIVLRHPLKG.

Residues 13 to 19 and 41 to 43 each bind GTP; these read GDEGKGK and GHT. Residue aspartate 14 is the Proton acceptor of the active site. Mg(2+)-binding residues include aspartate 14 and glycine 41. IMP is bound by residues 14–17, 39–42, threonine 130, arginine 144, glutamine 225, threonine 240, and arginine 304; these read DEGK and NAGH. Catalysis depends on histidine 42, which acts as the Proton donor. 300–306 contributes to the substrate binding site; sequence SVTGRPR. GTP-binding positions include arginine 306, 332–334, and 414–416; these read KLD and STG.

This sequence belongs to the adenylosuccinate synthetase family. Homodimer. The cofactor is Mg(2+).

The protein resides in the cytoplasm. The enzyme catalyses IMP + L-aspartate + GTP = N(6)-(1,2-dicarboxyethyl)-AMP + GDP + phosphate + 2 H(+). The protein operates within purine metabolism; AMP biosynthesis via de novo pathway; AMP from IMP: step 1/2. Plays an important role in the de novo pathway of purine nucleotide biosynthesis. Catalyzes the first committed step in the biosynthesis of AMP from IMP. The protein is Adenylosuccinate synthetase of Bordetella avium (strain 197N).